Here is a 153-residue protein sequence, read N- to C-terminus: Large ribosomal subunit protein uL22 (153 aa).

This sequence belongs to the universal ribosomal protein uL22 family. In terms of assembly, part of the 50S ribosomal subunit.

Its function is as follows. This protein binds specifically to 23S rRNA. It makes multiple contacts with different domains of the 23S rRNA in the assembled 50S subunit and ribosome. Functionally, the globular domain of the protein is located near the polypeptide exit tunnel on the outside of the subunit, while an extended beta-hairpin is found that lines the wall of the exit tunnel in the center of the 70S ribosome. The protein is Large ribosomal subunit protein uL22 of Methanococcus maripaludis (strain C5 / ATCC BAA-1333).